A 405-amino-acid polypeptide reads, in one-letter code: NADH-quinone oxidoreductase subunit D (405 aa).

This sequence belongs to the complex I 49 kDa subunit family. NDH-1 is composed of 14 different subunits. Subunits NuoB, C, D, E, F, and G constitute the peripheral sector of the complex.

The protein resides in the cell inner membrane. It carries out the reaction a quinone + NADH + 5 H(+)(in) = a quinol + NAD(+) + 4 H(+)(out). Functionally, NDH-1 shuttles electrons from NADH, via FMN and iron-sulfur (Fe-S) centers, to quinones in the respiratory chain. The immediate electron acceptor for the enzyme in this species is believed to be ubiquinone. Couples the redox reaction to proton translocation (for every two electrons transferred, four hydrogen ions are translocated across the cytoplasmic membrane), and thus conserves the redox energy in a proton gradient. This is NADH-quinone oxidoreductase subunit D from Afipia carboxidovorans (strain ATCC 49405 / DSM 1227 / KCTC 32145 / OM5) (Oligotropha carboxidovorans).